We begin with the raw amino-acid sequence, 144 residues long: HTH-type transcriptional regulator BilQ (144 aa).

The HTH marR-type domain occupies 1–134 (MEQTFAYYTT…LFTLLQKLGK (134 aa)). Residues 48–71 (QRELAAAVRADEGYAARSVEKLLQ) constitute a DNA-binding region (H-T-H motif).

Transcription regulator that regulates expression of the bilirubin reductase operon (bilQ, bilR and bilS). In Clostridium symbiosum (strain WAL-14163), this protein is HTH-type transcriptional regulator BilQ.